The primary structure comprises 245 residues: Adapter protein MecA (245 aa).

It belongs to the MecA family. In terms of assembly, homodimer.

In terms of biological role, enables the recognition and targeting of unfolded and aggregated proteins to the ClpC protease or to other proteins involved in proteolysis. This chain is Adapter protein MecA, found in Streptococcus pneumoniae (strain ATCC BAA-255 / R6).